Reading from the N-terminus, the 172-residue chain is GTP-dependent dephospho-CoA kinase (172 aa).

GTP is bound by residues Asp-40, Val-41, Val-42, Asp-59, and Glu-112.

Belongs to the GTP-dependent DPCK family.

It carries out the reaction 3'-dephospho-CoA + GTP = GDP + CoA + H(+). The protein operates within cofactor biosynthesis; coenzyme A biosynthesis. Functionally, catalyzes the GTP-dependent phosphorylation of the 3'-hydroxyl group of dephosphocoenzyme A to form coenzyme A (CoA). In Methanospirillum hungatei JF-1 (strain ATCC 27890 / DSM 864 / NBRC 100397 / JF-1), this protein is GTP-dependent dephospho-CoA kinase.